The primary structure comprises 884 residues: Protein P (884 aa).

The terminal protein domain (TP) stretch occupies residues 1-184 (MHPFSRLFRN…GKPYSWEHRQ (184 aa)). The segment at 185–387 (LVQHNGQQHK…YCIHHIVSSL (203 aa)) is spacer. A disordered region spans residues 299–345 (RNSGHTTWFSSASNSNKSRSREKAYSSNSTSKRYSPPLNYEKSDFSS). Residues 388–729 (DDWGPCTVTG…YEELWPVVRQ (342 aa)) form a polymerase/reverse transcriptase domain (RT) region. The Reverse transcriptase domain occupies 398-639 (DVTIKSPRTP…NHLHFMGYVI (242 aa)). Mg(2+) contacts are provided by aspartate 470, aspartate 590, and aspartate 591.

This sequence belongs to the hepadnaviridae P protein family.

The catalysed reaction is DNA(n) + a 2'-deoxyribonucleoside 5'-triphosphate = DNA(n+1) + diphosphate. It catalyses the reaction Endonucleolytic cleavage to 5'-phosphomonoester.. With respect to regulation, activated by host HSP70 and HSP40 in vitro to be able to bind the epsilon loop of the pgRNA. Because deletion of the RNase H region renders the protein partly chaperone-independent, the chaperones may be needed indirectly to relieve occlusion of the RNA-binding site by this domain. Inhibited by several reverse-transcriptase inhibitors: Lamivudine, Adefovir and Entecavir. Its function is as follows. Multifunctional enzyme that converts the viral RNA genome into dsDNA in viral cytoplasmic capsids. This enzyme displays a DNA polymerase activity that can copy either DNA or RNA templates, and a ribonuclease H (RNase H) activity that cleaves the RNA strand of RNA-DNA heteroduplexes in a partially processive 3'- to 5'-endonucleasic mode. Neo-synthesized pregenomic RNA (pgRNA) are encapsidated together with the P protein, and reverse-transcribed inside the nucleocapsid. Initiation of reverse-transcription occurs first by binding the epsilon loop on the pgRNA genome, and is initiated by protein priming, thereby the 5'-end of (-)DNA is covalently linked to P protein. Partial (+)DNA is synthesized from the (-)DNA template and generates the relaxed circular DNA (RC-DNA) genome. After budding and infection, the RC-DNA migrates in the nucleus, and is converted into a plasmid-like covalently closed circular DNA (cccDNA). The activity of P protein does not seem to be necessary for cccDNA generation, and is presumably released from (+)DNA by host nuclear DNA repair machinery. The polypeptide is Protein P (Woodchuck hepatitis B virus (isolate 7) (WHV)).